Consider the following 1058-residue polypeptide: SIT4-associating protein SAP185 (1058 aa).

Lys20 participates in a covalent cross-link: Glycyl lysine isopeptide (Lys-Gly) (interchain with G-Cter in ubiquitin). 6 disordered regions span residues 34-71 (TSTE…NREE), 135-202 (SEDR…ELEE), 513-556 (NSQN…TSID), 818-862 (CQEE…DQEQ), 873-892 (TKTR…VPGE), and 934-992 (ELSD…HDYD). The span at 42 to 55 (DSNSTDESLESNSF) shows a compositional bias: polar residues. Composition is skewed to basic and acidic residues over residues 135-146 (SEDRDLVRGEDK) and 153-175 (ENAK…TRSG). Over residues 176–189 (EEEELENEENDSAS) the composition is skewed to acidic residues. Residues 190–202 (EDTRVTLPHELEE) show a composition bias toward basic and acidic residues. Composition is skewed to acidic residues over residues 528-546 (ENED…DDTN) and 820-837 (EEEE…EDEP). Residues 838–861 (QEYRNGDSVRSKESNSSEGKRDQE) are compositionally biased toward basic and acidic residues. Residues 934–963 (ELSDGWESSPSNSIPKRASPSKNGMNSPMF) show a composition bias toward polar residues. The segment covering 967 to 991 (FELHSPTDEFGGHKDEILSAEGHDY) has biased composition (basic and acidic residues).

Belongs to the SAPS family. In terms of processing, hyperphosphorylated in the absence of SIT4.

Its function is as follows. Associates with the SIT4 phosphatase in a cell cycle dependent manner. May be directly or indirectly involved in SIT4-dependent functions in budding and in normal G1 cyclin expression. The sequence is that of SIT4-associating protein SAP185 (SAP185) from Saccharomyces cerevisiae (strain ATCC 204508 / S288c) (Baker's yeast).